Reading from the N-terminus, the 240-residue chain is Uridylate kinase (240 aa).

Residue 13–16 (KASG) participates in ATP binding. The interval 21–26 (GSQGFG) is involved in allosteric activation by GTP. Residue Gly55 participates in UMP binding. Positions 56 and 60 each coordinate ATP. Residues Asp75 and 136–143 (TGNPFFTT) contribute to the UMP site. ATP is bound by residues Thr163, Gln164, Tyr169, and Asp172.

It belongs to the UMP kinase family. In terms of assembly, homohexamer.

It is found in the cytoplasm. The enzyme catalyses UMP + ATP = UDP + ADP. The protein operates within pyrimidine metabolism; CTP biosynthesis via de novo pathway; UDP from UMP (UMPK route): step 1/1. With respect to regulation, allosterically activated by GTP. Inhibited by UTP. Catalyzes the reversible phosphorylation of UMP to UDP. This is Uridylate kinase from Rhizobium meliloti (strain 1021) (Ensifer meliloti).